The primary structure comprises 485 residues: E3 ubiquitin-protein ligase RNF8 (485 aa).

In terms of domain architecture, FHA spans 38–92; the sequence is VTVGRGFGVTYQLVSKICPLMISRNHCVLKQNPEGQWTIMDNKSLNGVWLNRARL. A required for interaction with PIWIL1 region spans residues 68 to 72; the sequence is QNPEG. A Phosphoserine modification is found at serine 157. A disordered region spans residues 181-220; sequence CESGQPVKSQGKGEVASTPSDNLDPKLTALEPSKTTGAPI. Residues 403–441 form an RING-type zinc finger; it reads CIICSEYFIEAVTLNCAHSFCSYCINEWMKRKIECPICR.

It belongs to the RNF8 family. Homodimer. Forms a E2-E3 ubiquitin ligase complex composed of the RNF8 homodimer and a E2 heterodimer of UBE2N and UBE2V2. Interacts with class III E2s, including UBE2E1, UBE2E2, and UBE2E3 and with UBE2N. Interacts with RXRA. Interacts (via FHA domain) with ATM-phosphorylated MDC1. Interacts (via FHA domain) with 'Thr-4827' phosphorylated HERC2 (via C-terminus). Interacts with PIWIL1; leading to sequester RNF8 in the cytoplasm. Interacts with WRAP53/TCAB1. As to quaternary structure, (Microbial infection) Interacts (via FHA domain) with phosphorylated human herpesvirus 1 ICP0 protein; leading to RNF8 degradation by the proteasome. Post-translationally, autoubiquitinated through 'Lys-48' and 'Lys-63' of ubiquitin. 'Lys-63' polyubiquitination is mediated by UBE2N. 'Lys-29'-type polyubiquitination is also observed, but it doesn't require its own functional RING-type zinc finger. As to expression, ubiquitous. In fetal tissues, highest expression in brain, thymus and liver. In adult tissues, highest levels in brain and testis, lowest levels in peripheral blood cells.

It is found in the nucleus. The protein localises to the cytoplasm. It localises to the midbody. The protein resides in the chromosome. Its subcellular location is the telomere. It carries out the reaction S-ubiquitinyl-[E2 ubiquitin-conjugating enzyme]-L-cysteine + [acceptor protein]-L-lysine = [E2 ubiquitin-conjugating enzyme]-L-cysteine + N(6)-ubiquitinyl-[acceptor protein]-L-lysine.. The protein operates within protein modification; protein ubiquitination. Functionally, E3 ubiquitin-protein ligase that plays a key role in DNA damage signaling via 2 distinct roles: by mediating the 'Lys-63'-linked ubiquitination of histones H2A and H2AX and promoting the recruitment of DNA repair proteins at double-strand breaks (DSBs) sites, and by catalyzing 'Lys-48'-linked ubiquitination to remove target proteins from DNA damage sites. Following DNA DSBs, it is recruited to the sites of damage by ATM-phosphorylated MDC1 and catalyzes the 'Lys-63'-linked ubiquitination of histones H2A and H2AX, thereby promoting the formation of TP53BP1 and BRCA1 ionizing radiation-induced foci (IRIF). Also controls the recruitment of UIMC1-BRCC3 (RAP80-BRCC36) and PAXIP1/PTIP to DNA damage sites. Promotes the recruitment of NBN to DNA damage sites by catalyzing 'Lys-6'-linked ubiquitination of NBN. Also recruited at DNA interstrand cross-links (ICLs) sites and catalyzes 'Lys-63'-linked ubiquitination of histones H2A and H2AX, leading to recruitment of FAAP20/C1orf86 and Fanconi anemia (FA) complex, followed by interstrand cross-link repair. H2A ubiquitination also mediates the ATM-dependent transcriptional silencing at regions flanking DSBs in cis, a mechanism to avoid collision between transcription and repair intermediates. Promotes the formation of 'Lys-63'-linked polyubiquitin chains via interactions with the specific ubiquitin-conjugating UBE2N/UBC13 and ubiquitinates non-histone substrates such as PCNA. Substrates that are polyubiquitinated at 'Lys-63' are usually not targeted for degradation. Also catalyzes the formation of 'Lys-48'-linked polyubiquitin chains via interaction with the ubiquitin-conjugating UBE2L6/UBCH8, leading to degradation of substrate proteins such as CHEK2, JMJD2A/KDM4A and KU80/XRCC5: it is still unclear how the preference toward 'Lys-48'- versus 'Lys-63'-linked ubiquitination is regulated but it could be due to RNF8 ability to interact with specific E2 specific ligases. For instance, interaction with phosphorylated HERC2 promotes the association between RNF8 and UBE2N/UBC13 and favors the specific formation of 'Lys-63'-linked ubiquitin chains. Promotes non-homologous end joining (NHEJ) by promoting the 'Lys-48'-linked ubiquitination and degradation the of KU80/XRCC5. Following DNA damage, mediates the ubiquitination and degradation of JMJD2A/KDM4A in collaboration with RNF168, leading to unmask H4K20me2 mark and promote the recruitment of TP53BP1 at DNA damage sites. Following DNA damage, mediates the ubiquitination and degradation of POLD4/p12, a subunit of DNA polymerase delta. In the absence of POLD4, DNA polymerase delta complex exhibits higher proofreading activity. In addition to its function in damage signaling, also plays a role in higher-order chromatin structure by mediating extensive chromatin decondensation. Involved in the activation of ATM by promoting histone H2B ubiquitination, which indirectly triggers histone H4 'Lys-16' acetylation (H4K16ac), establishing a chromatin environment that promotes efficient activation of ATM kinase. Required in the testis, where it plays a role in the replacement of histones during spermatogenesis. At uncapped telomeres, promotes the joining of deprotected chromosome ends by inducing H2A ubiquitination and TP53BP1 recruitment, suggesting that it may enhance cancer development by aggravating telomere-induced genome instability in case of telomeric crisis. Promotes the assembly of RAD51 at DNA DSBs in the absence of BRCA1 and TP53BP1 Also involved in class switch recombination in immune system, via its role in regulation of DSBs repair. May be required for proper exit from mitosis after spindle checkpoint activation and may regulate cytokinesis. May play a role in the regulation of RXRA-mediated transcriptional activity. Not involved in RXRA ubiquitination by UBE2E2. This chain is E3 ubiquitin-protein ligase RNF8, found in Homo sapiens (Human).